We begin with the raw amino-acid sequence, 78 residues long: Omega-conotoxin PnVIA (78 aa).

An N-terminal signal peptide occupies residues 1–22; the sequence is MKLTCMMIIAVLFLTAWTFVMA. Residues 23–45 constitute a propeptide that is removed on maturation; it reads DDPRDEPEARDEMNPAASKLNER. Cystine bridges form between Cys-47/Cys-65, Cys-54/Cys-69, and Cys-64/Cys-73. Gln-76 carries the post-translational modification Glutamine amide.

Expressed by the venom duct.

It localises to the secreted. Omega-conotoxins act at presynaptic membranes, they bind and block voltage-gated calcium channels (Cav). Acts on high voltage-activated (HVA) calcium currents in molluscan neurons. This chain is Omega-conotoxin PnVIA, found in Conus pennaceus (Feathered cone).